Here is a 473-residue protein sequence, read N- to C-terminus: Serine palmitoyltransferase 1 (473 aa).

Over M1 to Q15 the chain is Lumenal. The segment at M1 to P66 is interaction with SPTLC2. The helical transmembrane segment at A16–I36 threads the bilayer. The Cytoplasmic segment spans residues R37 to L473. At Y164 the chain carries Phosphotyrosine; by ABL.

This sequence belongs to the class-II pyridoxal-phosphate-dependent aminotransferase family. Component of the serine palmitoyltransferase (SPT) complex, which is also composed of SPTLC2 or SPTLC3 and SPTSSA or SPTSSB. The heterodimer with SPTLC2 or SPTLC3 forms the catalytic core of the enzyme, while SPTSSA or SPTSSB subunits determine substrate specificity. SPT also interacts with ORMDL proteins, especially ORMDL3, which negatively regulate SPT activity in the presence of ceramides. Forms dimers of heterodimers with SPTLC2. Interacts with RTN4. Pyridoxal 5'-phosphate serves as cofactor. Post-translationally, phosphorylation at Tyr-164 inhibits activity and promotes cell survival.

The protein localises to the endoplasmic reticulum membrane. The catalysed reaction is L-serine + hexadecanoyl-CoA + H(+) = 3-oxosphinganine + CO2 + CoA. It catalyses the reaction octadecanoyl-CoA + L-serine + H(+) = 3-oxoeicosasphinganine + CO2 + CoA. It carries out the reaction tetradecanoyl-CoA + L-serine + H(+) = 3-oxohexadecasphinganine + CO2 + CoA. The enzyme catalyses dodecanoyl-CoA + L-serine + H(+) = 3-oxotetradecasphinganine + CO2 + CoA. It participates in lipid metabolism; sphingolipid metabolism. SPT complex catalytic activity is negatively regulated by ORMDL proteins, including ORMDL3, in the presence of ceramides. This mechanism allows to maintain ceramide levels at sufficient concentrations for the production of complex sphingolipids, but which prevents the accumulation of ceramides to levels that trigger apoptosis. In terms of biological role, component of the serine palmitoyltransferase multisubunit enzyme (SPT) that catalyzes the initial and rate-limiting step in sphingolipid biosynthesis by condensing L-serine and activated acyl-CoA (most commonly palmitoyl-CoA) to form long-chain bases. The SPT complex is also composed of SPTLC2 or SPTLC3 and SPTSSA or SPTSSB. Within this complex, the heterodimer with SPTLC2 or SPTLC3 forms the catalytic core. The composition of the serine palmitoyltransferase (SPT) complex determines the substrate preference. The SPTLC1-SPTLC2-SPTSSA complex shows a strong preference for C16-CoA substrate, while the SPTLC1-SPTLC3-SPTSSA isozyme uses both C14-CoA and C16-CoA as substrates, with a slight preference for C14-CoA. The SPTLC1-SPTLC2-SPTSSB complex shows a strong preference for C18-CoA substrate, while the SPTLC1-SPTLC3-SPTSSB isozyme displays an ability to use a broader range of acyl-CoAs, without apparent preference. Required for adipocyte cell viability and metabolic homeostasis. This Bos taurus (Bovine) protein is Serine palmitoyltransferase 1 (SPTLC1).